The sequence spans 28 residues: Potassium channel toxin alpha-KTx 9.7 (28 aa).

3 disulfide bridges follow: Cys3–Cys19, Cys6–Cys24, and Cys10–Cys26.

In terms of tissue distribution, expressed by the venom gland.

The protein localises to the secreted. Its function is as follows. Calcium channel activator. Rapidly and reversibly activates ryanodine receptor 1 (RYR1). The sequence is that of Potassium channel toxin alpha-KTx 9.7 from Hottentotta judaicus (Black scorpion).